Here is a 445-residue protein sequence, read N- to C-terminus: MQTPNNNGSTDSVLPPTSAGTTPPPPLQQSTPPPQQQQQQQWQQQQQWMAAMQQYPAAAMAMMQQQQMMMYPHPQYAPYNQAAYQQHPQFQYAAYQQQQQQHHQSQQQPRGGSGGDDVKTLWVGDLLHWMDETYLHTCFSHTNEVSSVKVIRNKQTCQSEGYGFVEFLSRSAAEEALQSFSGVTMPNAEQPFRLNWASFSTGEKRASENGPDLSIFVGDLAPDVSDAVLLETFAGRYPSVKGAKVVIDSNTGRSKGYGFVRFGDENERSRAMTEMNGAFCSSRQMRVGIATPKRAAAYGQQNGSQALTLAGGHGGNGSMSDGESNNSTIFVGGLDADVTEEDLMQPFSDFGEVVSVKIPVGKGCGFVQFANRQSAEEAIGNLNGTVIGKNTVRLSWGRSPNKQWRSDSGNQWNGGYSRGQGYNNGYANQDSNMYATAAAAVPGAS.

The segment covering 1 to 12 (MQTPNNNGSTDS) has biased composition (polar residues). Disordered stretches follow at residues 1 to 45 (MQTP…WQQQ) and 93 to 117 (AAYQ…GGDD). A compositionally biased stretch (pro residues) spans 22–35 (TPPPPLQQSTPPPQ). Low complexity-rich tracts occupy residues 36 to 45 (QQQQQQWQQQ) and 93 to 108 (AAYQ…SQQQ). 3 consecutive RRM domains span residues 119–199 (KTLW…WASF), 213–292 (LSIF…IATP), and 327–399 (STIF…WGRS).

Belongs to the polyadenylate-binding RBP47 family. As to quaternary structure, interacts with the poly(A) tail of mRNA in nucleus. In terms of tissue distribution, expressed in leaves, stems, flowers, and seedlings.

It is found in the nucleus. Its subcellular location is the cytoplasmic granule. Its function is as follows. Heterogeneous nuclear ribonucleoprotein (hnRNP)-protein binding the poly(A) tail of mRNA and probably involved in some steps of pre-mRNA maturation. The protein is Polyadenylate-binding protein RBP47A (RBP47A) of Arabidopsis thaliana (Mouse-ear cress).